The chain runs to 297 residues: Light-independent protochlorophyllide reductase iron-sulfur ATP-binding protein (297 aa).

Residues Gly-41–Thr-46 and Lys-70 contribute to the ATP site. A Mg(2+)-binding site is contributed by Ser-45. 2 residues coordinate [4Fe-4S] cluster: Cys-126 and Cys-160. ATP is bound by residues Asn-211 to Arg-212 and Pro-235 to Leu-237.

Belongs to the NifH/BchL/ChlL family. As to quaternary structure, homodimer. Protochlorophyllide reductase is composed of three subunits; BchL, BchN and BchB. It depends on [4Fe-4S] cluster as a cofactor.

It catalyses the reaction chlorophyllide a + oxidized 2[4Fe-4S]-[ferredoxin] + 2 ADP + 2 phosphate = protochlorophyllide a + reduced 2[4Fe-4S]-[ferredoxin] + 2 ATP + 2 H2O. The protein operates within porphyrin-containing compound metabolism; bacteriochlorophyll biosynthesis (light-independent). Component of the dark-operative protochlorophyllide reductase (DPOR) that uses Mg-ATP and reduced ferredoxin to reduce ring D of protochlorophyllide (Pchlide) to form chlorophyllide a (Chlide). This reaction is light-independent. The L component serves as a unique electron donor to the NB-component of the complex, and binds Mg-ATP. This is Light-independent protochlorophyllide reductase iron-sulfur ATP-binding protein from Methylobacterium radiotolerans (strain ATCC 27329 / DSM 1819 / JCM 2831 / NBRC 15690 / NCIMB 10815 / 0-1).